The following is a 96-amino-acid chain: Putative regulatory protein Teth514_1762 (96 aa).

Belongs to the RemA family.

The polypeptide is Putative regulatory protein Teth514_1762 (Thermoanaerobacter sp. (strain X514)).